The sequence spans 165 residues: MLMPKKNRIAIYELLFKEGVMVAKKDVHMPKHPELADKNVPNLHVMKAMQSLKSRGYVKEQFAWRHFYWYLTNEGIQYLRDYLHLPPEIVPATLRRSRPETGRPRPKGLEGERPARLTRGEADRDTYRRSAVPPGADKKAEAGAGSATEFQFRGGFGRGRGQPPQ.

Phosphotyrosine is present on Tyr-12. Positions 92–165 (ATLRRSRPET…FGRGRGQPPQ (74 aa)) are disordered. Positions 97–128 (SRPETGRPRPKGLEGERPARLTRGEADRDTYR) are enriched in basic and acidic residues. Glycyl lysine isopeptide (Lys-Gly) (interchain with G-Cter in ubiquitin) cross-links involve residues Lys-138 and Lys-139. Ser-146 carries the phosphoserine modification. The residue at position 153 (Arg-153) is an Omega-N-methylarginine. Positions 154–165 (GGFGRGRGQPPQ) are enriched in gly residues. A symmetric dimethylarginine mark is found at Arg-158 and Arg-160.

The protein belongs to the eukaryotic ribosomal protein eS10 family. As to quaternary structure, component of the small ribosomal subunit. The methylated form interacts with NPM1. In terms of processing, methylated by PRMT5. Methylation is necessary for its interaction with NPS1, its localization in the granular component (GC) region of the nucleolus, for the proper assembly of ribosomes, protein synthesis and optimal cell proliferation. Post-translationally, monoubiquitinated by ZNF598 when a ribosome has stalled during translation of poly(A) sequences, leading to preclude synthesis of a long poly-lysine tail and initiate the ribosome quality control (RQC) pathway to degrade the potentially detrimental aberrant nascent polypeptide. Deubiquitinated by OTUD3 and USP21, antagonizing ZNF598 activity. Deubiquitinated by OTUD1, antagonizing ZNF598 activity and stimulating formation of polysomes: deubiquitination by OTUD1 promotes stability and translation of a subset mRNAs with a high abundance of rare codons can limit the translation rate. Deubiquitinated by USP10.

The protein localises to the cytoplasm. It localises to the nucleus. Its subcellular location is the nucleolus. Its function is as follows. Component of the 40S ribosomal subunit. The ribosome is a large ribonucleoprotein complex responsible for the synthesis of proteins in the cell. The protein is Small ribosomal subunit protein eS10 (RPS10) of Oryctolagus cuniculus (Rabbit).